Here is a 94-residue protein sequence, read N- to C-terminus: Selenoprotein K (94 aa).

A helical transmembrane segment spans residues 20–42 (LSFLTDFFWGAVEFIGLFFQTLV). The tract at residues 48–94 (KDGNNSASSRFSDGRGPPGFPGRRRMGRINHGAGPTPPPMGGGGUGR) is disordered. The span at 49–58 (DGNNSASSRF) shows a compositional bias: polar residues. A non-standard amino acid (selenocysteine) is located at residue Sec92.

This sequence belongs to the selenoprotein K family.

It is found in the endoplasmic reticulum membrane. Its subcellular location is the cell membrane. Required for Ca(2+) flux in immune cells and plays a role in T-cell proliferation and in T-cell and neutrophil migration. Involved in endoplasmic reticulum-associated degradation (ERAD) of soluble glycosylated proteins. Required for cell surface expression of CD36 and involved in macrophage uptake of low-density lipoprotein and in foam cell formation. Required for palmitoylation. This is Selenoprotein K (selenok) from Danio rerio (Zebrafish).